Consider the following 900-residue polypeptide: E3 ubiquitin-protein ligase BRE1-like 2 (900 aa).

The disordered stretch occupies residues 1–31 (MENQESDEPMQKKPHLLDSVSPNSMARNSSP). Polar residues predominate over residues 20–31 (VSPNSMARNSSP). Coiled coils occupy residues 63 to 96 (TVLQLQNQKLVQQLDLQKKQLYDVESKIQELQLN), 217 to 300 (EDAT…KDAA), 437 to 660 (SRIE…AEME), and 706 to 737 (SEKQVMEKQLHQVNASVENFKARIAHNEEQMK). The segment at 848–887 (CGVCFDRPKEVVIVKCYHLFCQQCIQRSLEIRHRKCPGCG) adopts an RING-type zinc-finger fold.

Belongs to the BRE1 family. In terms of assembly, may act as a tetramer consisting of two copies of HUB1 and two copies of HUB2. Ubiquitously expressed.

The protein resides in the nucleus. The catalysed reaction is S-ubiquitinyl-[E2 ubiquitin-conjugating enzyme]-L-cysteine + [acceptor protein]-L-lysine = [E2 ubiquitin-conjugating enzyme]-L-cysteine + N(6)-ubiquitinyl-[acceptor protein]-L-lysine.. It participates in protein modification; protein ubiquitination. Functionally, E3 ubiquitin-protein ligase that monoubiquitinates H2B to form H2BK143ub1. H2BK143ub1 gives a specific tag for epigenetic transcriptional activation and is also prerequisite for H3K4me and maybe H3K79me. It thereby plays a central role in histone code and gene regulation. Forms a ubiquitin ligase complex in cooperation with the E2 enzyme UBC2/RAD6. The chain is E3 ubiquitin-protein ligase BRE1-like 2 (HUB2) from Arabidopsis thaliana (Mouse-ear cress).